The chain runs to 169 residues: Large ribosomal subunit protein uL5 (169 aa).

Belongs to the universal ribosomal protein uL5 family. Part of the 50S ribosomal subunit; contacts the 5S rRNA and probably tRNA. Forms a bridge to the 30S subunit in the 70S ribosome.

In terms of biological role, this is one of the proteins that bind and probably mediate the attachment of the 5S RNA into the large ribosomal subunit, where it forms part of the central protuberance. In the 70S ribosome it contacts protein S13 of the 30S subunit (bridge B1b), connecting the 2 subunits; this bridge is implicated in subunit movement. May contact the P site tRNA; the 5S rRNA and some of its associated proteins might help stabilize positioning of ribosome-bound tRNAs. This chain is Large ribosomal subunit protein uL5, found in Methanosarcina barkeri (strain Fusaro / DSM 804).